The chain runs to 176 residues: Ribosome maturation factor RimM (176 aa).

One can recognise a PRC barrel domain in the interval 100–173 (KDEYHYHDLI…WLLINPPPGL (74 aa)).

Belongs to the RimM family. In terms of assembly, binds ribosomal protein uS19.

The protein resides in the cytoplasm. Its function is as follows. An accessory protein needed during the final step in the assembly of 30S ribosomal subunit, possibly for assembly of the head region. Essential for efficient processing of 16S rRNA. May be needed both before and after RbfA during the maturation of 16S rRNA. It has affinity for free ribosomal 30S subunits but not for 70S ribosomes. This is Ribosome maturation factor RimM from Prochlorococcus marinus (strain NATL2A).